Reading from the N-terminus, the 403-residue chain is Exodeoxyribonuclease 7 large subunit (403 aa).

Belongs to the XseA family. In terms of assembly, heterooligomer composed of large and small subunits.

The protein resides in the cytoplasm. It carries out the reaction Exonucleolytic cleavage in either 5'- to 3'- or 3'- to 5'-direction to yield nucleoside 5'-phosphates.. Its function is as follows. Bidirectionally degrades single-stranded DNA into large acid-insoluble oligonucleotides, which are then degraded further into small acid-soluble oligonucleotides. In Clostridium botulinum (strain Okra / Type B1), this protein is Exodeoxyribonuclease 7 large subunit.